The sequence spans 317 residues: Neurogenic differentiation factor 6-B (317 aa).

Disordered regions lie at residues 1–90 (MLTV…ERSR) and 297–317 (DLHPRSQSFQSQDELNTGYHN). Acidic residues predominate over residues 37–56 (EAEDDNTDREEEEEREEDEN). Over residues 59 to 69 (PKKKGPRKKKS) the composition is skewed to basic residues. The Nuclear localization signal motif lies at 65–70 (RKKKSE). Residues 70 to 90 (EGRGDRVKMRRQEANARERSR) are compositionally biased toward basic and acidic residues. The bHLH domain maps to 78–130 (MRRQEANARERSRMHGLNDALESLRKVVPCYSKTQKLSKIETLRLAKNYIWAL). Positions 301–317 (RSQSFQSQDELNTGYHN) are enriched in polar residues.

In terms of assembly, efficient DNA binding requires dimerization with another bHLH protein. Embryonic olfactory bulbs and olfactory placodes. In adult, expressed in brain and eye.

It is found in the nucleus. Its function is as follows. Differentiation factor required for neurogenesis. Does not act as an upstream activator of isl1. In Danio rerio (Zebrafish), this protein is Neurogenic differentiation factor 6-B.